The sequence spans 101 residues: Large ribosomal subunit protein eL43 (101 aa).

A C4-type zinc finger spans residues 40-62 (CPSCRSLVRLKRLAFGIWQCPKC).

Belongs to the eukaryotic ribosomal protein eL43 family. It depends on Zn(2+) as a cofactor.

The protein is Large ribosomal subunit protein eL43 of Pyrobaculum islandicum (strain DSM 4184 / JCM 9189 / GEO3).